Consider the following 597-residue polypeptide: Polyphenol oxidase latent form, chloroplastic (597 aa).

The N-terminal 49 residues, 1 to 49 (MATAPSPTTMGTYSSLISTNSFSTFLPNKSQLSLSGKSKHYVARRSSIS), are a transit peptide targeting the chloroplast. The disordered stretch occupies residues 49–70 (SCKATNNNNSNNQNEQQEESSR). The N-terminal 52 residues, 50-101 (CKATNNNNSNNQNEQQEESSRLLGKLDRRNILIGLGGLYGATTLDRKPFAFA), are a transit peptide targeting the thylakoid. Residues 54–63 (NNNNSNNQNE) are compositionally biased toward low complexity. 2 disulfide bridges follow: Cys-112–Cys-128 and Cys-127–Cys-189. Cu cation is bound by residues His-188, His-209, His-218, His-341, His-345, and His-375. A cross-link (2'-(S-cysteinyl)-histidine (Cys-His)) is located at residues 192–209 (CNGAYPQVGFTDNDIQVH).

The protein belongs to the tyrosinase family. In terms of assembly, monomer. It depends on Cu(2+) as a cofactor. As to expression, expressed in immature-green fruit.

The protein resides in the plastid. Its subcellular location is the chloroplast thylakoid lumen. It catalyses the reaction 2 catechol + O2 = 2 1,2-benzoquinone + 2 H2O. With respect to regulation, activated in the presence of substrate at low pH. Specific activity fluctuates during fruit ripening, starting at immature-green stage, reaching a peak at the breaker stage, followed by a sharp decrease until the half-ripe stage to remain stable during the following development stages. Triggered by CuSO(4) and by low concentrations of SDS. Repressed by several inhibitors including 4-hexylresorcinol, ascorbic acid, benzoic acid, kojic acid, glutathione (reduced form), L-cysteine and sodium metabisulfite. Inhibited by various salt such as FeSO(4), KCl, NaCl, CaCl(2), MnCl(2), NiCl(2) and AlCl(3). Spontaneously activated during storage at 4 degrees Celsius. Functionally, catalyzes the oxidation of mono- and o-diphenols to o-diquinones. Uses preferentially 4-methylcatechol and chlorogenic acid as substrates, followed by caffeic acid, pyrogallol, and catechol, but barely active toward dopamine and L-dopa. No activity detected with monophenols (e.g. phenol and tyramine). This Prunus armeniaca (Apricot) protein is Polyphenol oxidase latent form, chloroplastic.